We begin with the raw amino-acid sequence, 134 residues long: Small ribosomal subunit protein uS12 (134 aa).

The interval 1–30 is disordered; that stretch reads MPTINQLVKHGREKVKEKSKSPALQGHPQK. 3-methylthioaspartic acid is present on Asp-89. Residues 106–134 are disordered; it reads GVENRRQSRSKYGAKRPKAGAAAGAKGKK. Residues 112-123 are compositionally biased toward basic residues; the sequence is QSRSKYGAKRPK. Residues 124–134 are compositionally biased toward low complexity; it reads AGAAAGAKGKK.

This sequence belongs to the universal ribosomal protein uS12 family. In terms of assembly, part of the 30S ribosomal subunit. Contacts proteins S8 and S17. May interact with IF1 in the 30S initiation complex.

In terms of biological role, with S4 and S5 plays an important role in translational accuracy. Functionally, interacts with and stabilizes bases of the 16S rRNA that are involved in tRNA selection in the A site and with the mRNA backbone. Located at the interface of the 30S and 50S subunits, it traverses the body of the 30S subunit contacting proteins on the other side and probably holding the rRNA structure together. The combined cluster of proteins S8, S12 and S17 appears to hold together the shoulder and platform of the 30S subunit. The chain is Small ribosomal subunit protein uS12 from Fervidobacterium nodosum (strain ATCC 35602 / DSM 5306 / Rt17-B1).